A 183-amino-acid polypeptide reads, in one-letter code: uncharacterized protein (183 aa).

This is an uncharacterized protein from Bacillus subtilis (strain 168).